The sequence spans 77 residues: Protein AC43 (77 aa).

In terms of biological role, plays a role in the production of occlusion bodies as well as expression of the polyhedrin gene. The chain is Protein AC43 from Autographa californica nuclear polyhedrosis virus (AcMNPV).